We begin with the raw amino-acid sequence, 488 residues long: Probable malate:quinone oxidoreductase (488 aa).

Belongs to the MQO family. FAD is required as a cofactor.

The catalysed reaction is (S)-malate + a quinone = a quinol + oxaloacetate. It functions in the pathway carbohydrate metabolism; tricarboxylic acid cycle; oxaloacetate from (S)-malate (quinone route): step 1/1. The sequence is that of Probable malate:quinone oxidoreductase from Neisseria meningitidis serogroup C / serotype 2a (strain ATCC 700532 / DSM 15464 / FAM18).